The following is a 199-amino-acid chain: Ribonuclease P protein subunit p25 (199 aa).

Over residues 1–11 the composition is skewed to basic and acidic residues; sequence MENFRKVRSEE. Disordered regions lie at residues 1-31 and 146-199; these read MENF…FADL and PRQL…DRTA. Serine 172 carries the phosphoserine modification. Residues 190 to 199 are compositionally biased toward acidic residues; the sequence is PEAENEDRTA.

Belongs to the histone-like Alba family. In terms of assembly, component of nuclear RNase P and RNase MRP ribonucleoproteins. RNase P consists of a catalytic RNA moiety and 10 different protein chains; POP1, POP4, POP5, POP7, RPP14, RPP21, RPP25, RPP30, RPP38 and RPP40. Within the RNase P complex, POP1, POP7 and RPP25 form the 'finger' subcomplex, POP5, RPP14, RPP40 and homodimeric RPP30 form the 'palm' subcomplex, and RPP21, POP4 and RPP38 form the 'wrist' subcomplex. All subunits of the RNase P complex interact with the catalytic RNA. Several subunits of RNase P are also part of the RNase MRP complex. RNase MRP consists of a catalytic RNA moiety and about 8 protein subunits; POP1, POP7, RPP25, RPP30, RPP38, RPP40 and possibly also POP4 and POP5. POP7 forms a heterodimer with RPP25 that binds to the P3 stem loop of the catalytic RNA.

It is found in the nucleus. The protein localises to the nucleolus. Component of ribonuclease P, a ribonucleoprotein complex that generates mature tRNA molecules by cleaving their 5'-ends. Also a component of the MRP ribonuclease complex, which cleaves pre-rRNA sequences. This Mus musculus (Mouse) protein is Ribonuclease P protein subunit p25 (Rpp25).